The chain runs to 411 residues: Prostaglandin E2 receptor EP3 subtype (411 aa).

The Extracellular portion of the chain corresponds to 1–49 (MKETRGDGGSAPFCTRLNHSYPGMWAPEARGNLTRPPGPGEDCGSVSVA). N18 and N32 each carry an N-linked (GlcNAc...) asparagine glycan. Residues 50 to 74 (FPITMLITGFVGNALAMLLVSRSYR) traverse the membrane as a helical segment. The Cytoplasmic portion of the chain corresponds to 75-87 (RRESKRKKSFLLC). The helical transmembrane segment at 88 to 108 (IGWLALTDLVGQLLTSPVVIL) threads the bilayer. At 109 to 127 (VYLSKQRWEQLDPSGRLCT) the chain is on the extracellular side. A disulfide bond links C126 and C204. A helical transmembrane segment spans residues 128–149 (FFGLTMTVFGLSSLFIASAMAV). Over 150-171 (ERALAIRAPHWYASHMKTRATR) the chain is Cytoplasmic. Residues 172–193 (AVLLGVWLAVLAFALLPVLGVG) traverse the membrane as a helical segment. Residues 194 to 223 (QYTIQWPGTWCFISTGRGDNGTSSSHNWGN) lie on the Extracellular side of the membrane. Residue N213 is glycosylated (N-linked (GlcNAc...) asparagine). The chain crosses the membrane as a helical span at residues 224–249 (LFFASTFAFLGLLALAITFTCNLATI). The Cytoplasmic portion of the chain corresponds to 250–279 (KALVSRCRAKAAASQSSAQWGRITTETAIQ). A helical membrane pass occupies residues 280-303 (LMGIMCVLSVCWSPLLIMMLKMIF). The Extracellular segment spans residues 304–323 (NQTSVEHCKTDTGKQKECNF). A helical membrane pass occupies residues 324–345 (FLIAVRLASLNQILDPWVYLLL). Topologically, residues 346 to 411 (RKILLRKFCQ…ADPGARPYQQ (66 aa)) are cytoplasmic. Residues 367 to 390 (IQRENRNVSHSGQHEEARDSEKSK) are compositionally biased toward basic and acidic residues. The segment at 367–392 (IQRENRNVSHSGQHEEARDSEKSKTI) is disordered.

This sequence belongs to the G-protein coupled receptor 1 family. Interacts (via C-terminus) with MKLN1. In the kidney cortex and medulla, adrenal gland and stomach. In kidney, expression is higher in tubules in the outer medulla, with lower levels in cortex. In kidney cortex, expression is restricted to distal tubules.

Its subcellular location is the cell membrane. In terms of biological role, receptor for prostaglandin E2 (PGE2). Required for normal development of fever in response to pyrinogens, including IL1B, prostaglandin E2 and bacterial lipopolysaccharide (LPS). Required for normal potentiation of platelet aggregation by prostaglandin E2, and thus plays a role in the regulation of blood coagulation. Required for increased HCO3(-) secretion in the duodenum in response to mucosal acidification, and thereby contributes to the protection of the mucosa against acid-induced ulceration. Not required for normal kidney function, normal urine volume and osmolality. The chain is Prostaglandin E2 receptor EP3 subtype (PTGER3) from Oryctolagus cuniculus (Rabbit).